Consider the following 1852-residue polypeptide: Chitin synthase csmA (1852 aa).

The interval 1–20 is disordered; the sequence is MVGTLPAGHTPSHVQSSLPS. The 787-residue stretch at 1–787 folds into the Myosin motor domain; that stretch reads MVGTLPAGHT…CWADLAKVGE (787 aa). An N-linked (GlcNAc...) asparagine glycan is attached at asparagine 58. 102 to 109 is a binding site for ATP; that stretch reads GESGAGKT. The tract at residues 599-646 is disordered; the sequence is SSKPLRMPSMARRKTSPASRLTFDATPAEDPYETESQTGSSAKNSSAK. Asparagine 642 is a glycosylation site (N-linked (GlcNAc...) asparagine). Positions 667-691 are actin-binding; that stretch reads LDIVNKCLTSGNLNPYFVFCLKPND. N-linked (GlcNAc...) asparagine glycosylation occurs at asparagine 840. 2 helical membrane-spanning segments follow: residues 895-915 and 930-950; these read WMAI…RYIG and FAIN…IVGF. The region spanning 958 to 1017 is the Cytochrome b5 heme-binding domain; the sequence is QHVYSPAELSSHDGKDGHSSYTSIRGLVLDLGEFMDSHYPGIVPDSALKKYAGVDSTALF. Residues asparagine 1044 and asparagine 1195 are each glycosylated (N-linked (GlcNAc...) asparagine). The helical transmembrane segment at 1205–1225 threads the bilayer; it reads FILAISVLICSVIVFKFFAAL. Asparagine 1428, asparagine 1462, and asparagine 1568 each carry an N-linked (GlcNAc...) asparagine glycan. Helical transmembrane passes span 1600-1620, 1626-1646, and 1653-1673; these read ISTI…VWLV, IPWT…IIFI, and MIGW…ALPL. Positions 1794–1849 constitute a DEK-C domain; the sequence is LPSDDAILSEIRDILRTADLMTVTKKNIKQELERRFGVNLDAKRPYINSATEAVLS.

The protein in the N-terminal section; belongs to the TRAFAC class myosin-kinesin ATPase superfamily. Myosin family. This sequence in the C-terminal section; belongs to the chitin synthase family. Class V subfamily. As to quaternary structure, binds F-actin via its N-terminal myosin motor-like domain (MMD). Interacts with kibesin kinA.

It is found in the cell membrane. It localises to the cell septum. The protein resides in the cell tip. It carries out the reaction [(1-&gt;4)-N-acetyl-beta-D-glucosaminyl](n) + UDP-N-acetyl-alpha-D-glucosamine = [(1-&gt;4)-N-acetyl-beta-D-glucosaminyl](n+1) + UDP + H(+). Its function is as follows. Polymerizes chitin, a structural polymer of the cell wall and septum, by transferring the sugar moiety of UDP-GlcNAc to the non-reducing end of the growing chitin polymer. Plays an important role in polarized hyphal cell wall synthesis and maintenance of cell wall integrity. Its role in growth and morphogenesis is particularly important under low osmotic conditions. This Emericella nidulans (Aspergillus nidulans) protein is Chitin synthase csmA.